Here is a 210-residue protein sequence, read N- to C-terminus: Glutathione S-transferase mdpJ (210 aa).

The region spanning 2 to 83 (SFGTLYTHNP…YCNDERSSLR (82 aa)) is the GST N-terminal domain. A GST C-terminal domain is found at 77-200 (DERSSLRILQ…VAGGVPDLGL (124 aa)).

This sequence belongs to the GST superfamily.

Its pathway is secondary metabolite biosynthesis. Functionally, glutathione S-transferase; part of the gene cluster that mediates the biosynthesis of monodictyphenone, a prenyl xanthone derivative. The pathway begins with the synthesis of atrochrysone thioester by the polyketide synthase (PKS) mdpG. The atrochrysone carboxyl ACP thioesterase mdpF then breaks the thioester bond and releases the atrochrysone carboxylic acid from mdpG. The atrochrysone carboxylic acid is then converted to atrochrysone which is further transformed into emodin anthrone. The next step is performed by the anthrone oxygenase mdpH that catalyzes the oxidation of emodinanthrone to emodin. Emodin is further modified to yield monodictyphenone via several steps involving mdpB, mdpC mdpJ, mdpK and mdpL. These enzymes with xptA, xptB and xptC are also proposed to be involved in the synthesis of shamixanthone from emodin. Especially, direct reduction of emodin by the short chain dehydrogenase mdpC followed by dehydration catalyzed by the scytalone dehydratase-like protein mdpB gives loss of oxygen and formation of chrysophanol intermediate in two simple steps. This chain is Glutathione S-transferase mdpJ, found in Emericella nidulans (strain FGSC A4 / ATCC 38163 / CBS 112.46 / NRRL 194 / M139) (Aspergillus nidulans).